Here is a 392-residue protein sequence, read N- to C-terminus: Protein DJ-1 homolog A (392 aa).

2 PfpI endopeptidase domains span residues 6–174 and 212–378; these read KTVL…EQLF and PQIL…EKFY.

The protein belongs to the peptidase C56 family. Homodimer. Interacts with CSD1 and GPX2.

Its subcellular location is the cytoplasm. The protein localises to the cytosol. The protein resides in the nucleus. Its function is as follows. Involved in oxidative stress response. Confers protection against diverse stresses by binding both CSD1 and GPX2 and mediating the cytosolic activation of the Cu-Zn-dependent superoxide dismutase activity of CSD1. The polypeptide is Protein DJ-1 homolog A (DJ1A) (Arabidopsis thaliana (Mouse-ear cress)).